Here is a 349-residue protein sequence, read N- to C-terminus: Bifunctional protein FolKE (349 aa).

Residues 1 to 226 are 2-amino-4-hydroxy-6-hydroxymethyldihydropteridine pyrophosphokinase; sequence MQTTYLSMGS…LFEIDSSKND (226 aa). The segment at 226–349 is GTP cyclohydrolase 1; it reads DSIVLIKDIP…KRMEFLESLL (124 aa).

In the N-terminal section; belongs to the HPPK family. The protein in the C-terminal section; belongs to the GTP cyclohydrolase I family. As to quaternary structure, homomer.

It carries out the reaction 6-hydroxymethyl-7,8-dihydropterin + ATP = (7,8-dihydropterin-6-yl)methyl diphosphate + AMP + H(+). The catalysed reaction is GTP + H2O = 7,8-dihydroneopterin 3'-triphosphate + formate + H(+). It functions in the pathway cofactor biosynthesis; 7,8-dihydroneopterin triphosphate biosynthesis; 7,8-dihydroneopterin triphosphate from GTP: step 1/1. The protein operates within cofactor biosynthesis; tetrahydrofolate biosynthesis; 2-amino-4-hydroxy-6-hydroxymethyl-7,8-dihydropteridine diphosphate from 7,8-dihydroneopterin triphosphate: step 4/4. This Lactococcus lactis subsp. cremoris (strain MG1363) protein is Bifunctional protein FolKE (folKE).